The primary structure comprises 355 residues: UDP-N-acetylglucosamine--N-acetylmuramyl-(pentapeptide) pyrophosphoryl-undecaprenol N-acetylglucosamine transferase (355 aa).

Residues 12 to 14, Asn-124, Arg-163, Ser-191, Ile-243, 262 to 267, and Gln-288 each bind UDP-N-acetyl-alpha-D-glucosamine; these read TGG and ALTVAE.

Belongs to the glycosyltransferase 28 family. MurG subfamily.

It localises to the cell inner membrane. It carries out the reaction di-trans,octa-cis-undecaprenyl diphospho-N-acetyl-alpha-D-muramoyl-L-alanyl-D-glutamyl-meso-2,6-diaminopimeloyl-D-alanyl-D-alanine + UDP-N-acetyl-alpha-D-glucosamine = di-trans,octa-cis-undecaprenyl diphospho-[N-acetyl-alpha-D-glucosaminyl-(1-&gt;4)]-N-acetyl-alpha-D-muramoyl-L-alanyl-D-glutamyl-meso-2,6-diaminopimeloyl-D-alanyl-D-alanine + UDP + H(+). Its pathway is cell wall biogenesis; peptidoglycan biosynthesis. Cell wall formation. Catalyzes the transfer of a GlcNAc subunit on undecaprenyl-pyrophosphoryl-MurNAc-pentapeptide (lipid intermediate I) to form undecaprenyl-pyrophosphoryl-MurNAc-(pentapeptide)GlcNAc (lipid intermediate II). The chain is UDP-N-acetylglucosamine--N-acetylmuramyl-(pentapeptide) pyrophosphoryl-undecaprenol N-acetylglucosamine transferase from Tolumonas auensis (strain DSM 9187 / NBRC 110442 / TA 4).